Reading from the N-terminus, the 69-residue chain is Cytochrome c oxidase subunit 8A, mitochondrial (69 aa).

The N-terminal 25 residues, 1-25 (MSVLTPLLLRGLAGSARRLPVPRAQ), are a transit peptide targeting the mitochondrion. The SIFI-degron motif lies at 2–19 (SVLTPLLLRGLAGSARRL). The Mitochondrial matrix portion of the chain corresponds to 26-36 (IHSKPPREQLG). The chain crosses the membrane as a helical span at residues 37 to 60 (TMDVAIGITSCFLCFLLPAGWVLS). Over 61–69 (HLESYKKRE) the chain is Mitochondrial intermembrane.

The protein belongs to the cytochrome c oxidase VIII family. Component of the cytochrome c oxidase (complex IV, CIV), a multisubunit enzyme composed of 14 subunits. The complex is composed of a catalytic core of 3 subunits MT-CO1, MT-CO2 and MT-CO3, encoded in the mitochondrial DNA, and 11 supernumerary subunits COX4I, COX5A, COX5B, COX6A, COX6B, COX6C, COX7A, COX7B, COX7C, COX8 and NDUFA4, which are encoded in the nuclear genome. The complex exists as a monomer or a dimer and forms supercomplexes (SCs) in the inner mitochondrial membrane with NADH-ubiquinone oxidoreductase (complex I, CI) and ubiquinol-cytochrome c oxidoreductase (cytochrome b-c1 complex, complex III, CIII), resulting in different assemblies (supercomplex SCI(1)III(2)IV(1) and megacomplex MCI(2)III(2)IV(2)). In response to mitochondrial stress, the precursor protein is ubiquitinated by the SIFI complex in the cytoplasm before mitochondrial import, leading to its degradation. Within the SIFI complex, UBR4 initiates ubiquitin chain that are further elongated or branched by KCMF1.

It is found in the mitochondrion inner membrane. It participates in energy metabolism; oxidative phosphorylation. Functionally, component of the cytochrome c oxidase, the last enzyme in the mitochondrial electron transport chain which drives oxidative phosphorylation. The respiratory chain contains 3 multisubunit complexes succinate dehydrogenase (complex II, CII), ubiquinol-cytochrome c oxidoreductase (cytochrome b-c1 complex, complex III, CIII) and cytochrome c oxidase (complex IV, CIV), that cooperate to transfer electrons derived from NADH and succinate to molecular oxygen, creating an electrochemical gradient over the inner membrane that drives transmembrane transport and the ATP synthase. Cytochrome c oxidase is the component of the respiratory chain that catalyzes the reduction of oxygen to water. Electrons originating from reduced cytochrome c in the intermembrane space (IMS) are transferred via the dinuclear copper A center (CU(A)) of subunit 2 and heme A of subunit 1 to the active site in subunit 1, a binuclear center (BNC) formed by heme A3 and copper B (CU(B)). The BNC reduces molecular oxygen to 2 water molecules using 4 electrons from cytochrome c in the IMS and 4 protons from the mitochondrial matrix. The polypeptide is Cytochrome c oxidase subunit 8A, mitochondrial (COX8A) (Carlito syrichta (Philippine tarsier)).